We begin with the raw amino-acid sequence, 266 residues long: Aliphatic sulfonates import ATP-binding protein SsuB (266 aa).

The ABC transporter domain occupies 23–244 (LALDAITKHY…RRGSAKLAEL (222 aa)). An ATP-binding site is contributed by 55–62 (GRSGCGKS).

Belongs to the ABC transporter superfamily. Aliphatic sulfonates importer (TC 3.A.1.17.2) family. The complex is composed of two ATP-binding proteins (SsuB), two transmembrane proteins (SsuC) and a solute-binding protein (SsuA).

It localises to the cell inner membrane. It carries out the reaction ATP + H2O + aliphatic sulfonate-[sulfonate-binding protein]Side 1 = ADP + phosphate + aliphatic sulfonateSide 2 + [sulfonate-binding protein]Side 1.. Part of the ABC transporter complex SsuABC involved in aliphatic sulfonates import. Responsible for energy coupling to the transport system. The chain is Aliphatic sulfonates import ATP-binding protein SsuB from Pectobacterium atrosepticum (strain SCRI 1043 / ATCC BAA-672) (Erwinia carotovora subsp. atroseptica).